Consider the following 154-residue polypeptide: Protein X (154 aa).

A disordered region spans residues Arg26–Val45. The span at Ser31–Ser43 shows a compositional bias: low complexity. A mitochondrial targeting sequence region spans residues Pro68–Phe117.

Belongs to the orthohepadnavirus protein X family. In terms of assembly, may form homodimer. May interact with host CEBPA, CFLAR, CREB1, DDB1, E4F1, HBXIP, HSPD1/HSP60, NFKBIA, POLR2E and SMAD4. Interacts with host SMC5-SMC6 complex and induces its degradation. Interacts with host TRPC4AP; leading to prevent ubiquitination of TRPC4AP. Interacts with host PLSCR1; this interaction promotes ubiquitination and degradation of HBx and impairs HBx-mediated cell proliferation. Post-translationally, a fraction may be phosphorylated in insect cells and HepG2 cells, a human hepatoblastoma cell line. Phosphorylated in vitro by host protein kinase C or mitogen-activated protein kinase. N-acetylated in insect cells.

It is found in the host cytoplasm. Its subcellular location is the host nucleus. The protein localises to the host mitochondrion. Functionally, multifunctional protein that plays a role in silencing host antiviral defenses and promoting viral transcription. Does not seem to be essential for HBV infection. May be directly involved in development of cirrhosis and liver cancer (hepatocellular carcinoma). Most of cytosolic activities involve modulation of cytosolic calcium. The effect on apoptosis is controversial depending on the cell types in which the studies have been conducted. May induce apoptosis by localizing in mitochondria and causing loss of mitochondrial membrane potential. May also modulate apoptosis by binding host CFLAR, a key regulator of the death-inducing signaling complex (DISC). Promotes viral transcription by using the host E3 ubiquitin ligase DDB1 to target the SMC5-SMC6 complex to proteasomal degradation. This host complex would otherwise bind to viral episomal DNA, and prevents its transcription. Moderately stimulates transcription of many different viral and cellular transcription elements. Promoters and enhancers stimulated by HBx contain DNA binding sites for NF-kappa-B, AP-1, AP-2, c-EBP, ATF/CREB, or the calcium-activated factor NF-AT. The polypeptide is Protein X (Hepatitis B virus genotype D subtype ayw (isolate Japan/JYW796/1988) (HBV-D)).